Here is a 72-residue protein sequence, read N- to C-terminus: Protein kish-A (72 aa).

The N-terminal stretch at 1–26 is a signal peptide; that stretch reads MSAIFNFQSLLTVILLLICTCAYIRS. Residues 27–53 are Extracellular-facing; that stretch reads LAPSLLDRNKTGLLGIFWKCARIGERK. An N-linked (GlcNAc...) asparagine glycan is attached at Asn-35. Residues 54 to 71 traverse the membrane as a helical segment; sequence SPYVAVCCIVMAFSILFI. Gln-72 is a topological domain (cytoplasmic).

Belongs to the KISH family.

It is found in the golgi apparatus membrane. In terms of biological role, involved in the early part of the secretory pathway. The polypeptide is Protein kish-A (TMEM167A) (Bos taurus (Bovine)).